The sequence spans 362 residues: UPF0324 membrane protein YPO1307/y2878/YP_1285 (362 aa).

The next 9 membrane-spanning stretches (helical) occupy residues 21–38 (YIPGLVLTGVITGLALNV), 48–70 (GLGALTLAILFGIIVGNTLYPWL), 102–124 (VADVGATGMVIDLLTLSSTFILA), 139–161 (VMLIGAGSSICGAAAIMATEPVL), 168–190 (VAVAVATVVIFGTLAIFVYPWLY), 240–257 (MIRVMMLAPFLLLLSAYL), 278–300 (WFAVIFILMAGFNSLNLLPAVWV), 305–327 (TLDTILLAMAMAALGLTTHIGSI), and 334–356 (PLLLALLLFIWLLVGGTGINLFV).

It belongs to the UPF0324 family.

Its subcellular location is the cell membrane. The sequence is that of UPF0324 membrane protein YPO1307/y2878/YP_1285 from Yersinia pestis.